The following is a 558-amino-acid chain: 2-isopropylmalate synthase (558 aa).

In terms of domain architecture, Pyruvate carboxyltransferase spans 31–306; sequence PIWCAVDLRD…DPGIDFSNID (276 aa). Residues Asp40, His245, His247, and Asn281 each contribute to the Mg(2+) site. Residues 440-558 are regulatory domain; the sequence is AGSPYSFLEH…LCAANHLSDK (119 aa).

This sequence belongs to the alpha-IPM synthase/homocitrate synthase family. LeuA type 2 subfamily. In terms of assembly, homodimer. Mg(2+) is required as a cofactor.

It is found in the cytoplasm. The catalysed reaction is 3-methyl-2-oxobutanoate + acetyl-CoA + H2O = (2S)-2-isopropylmalate + CoA + H(+). It functions in the pathway amino-acid biosynthesis; L-leucine biosynthesis; L-leucine from 3-methyl-2-oxobutanoate: step 1/4. Functionally, catalyzes the condensation of the acetyl group of acetyl-CoA with 3-methyl-2-oxobutanoate (2-ketoisovalerate) to form 3-carboxy-3-hydroxy-4-methylpentanoate (2-isopropylmalate). This Rhodospirillum rubrum (strain ATCC 11170 / ATH 1.1.1 / DSM 467 / LMG 4362 / NCIMB 8255 / S1) protein is 2-isopropylmalate synthase.